We begin with the raw amino-acid sequence, 170 residues long: Peptide deformylase (170 aa).

Residues Cys93 and His135 each contribute to the Fe cation site. The active site involves Glu136. His139 is a Fe cation binding site.

It belongs to the polypeptide deformylase family. Fe(2+) serves as cofactor.

It catalyses the reaction N-terminal N-formyl-L-methionyl-[peptide] + H2O = N-terminal L-methionyl-[peptide] + formate. In terms of biological role, removes the formyl group from the N-terminal Met of newly synthesized proteins. Requires at least a dipeptide for an efficient rate of reaction. N-terminal L-methionine is a prerequisite for activity but the enzyme has broad specificity at other positions. The sequence is that of Peptide deformylase from Acidobacterium capsulatum (strain ATCC 51196 / DSM 11244 / BCRC 80197 / JCM 7670 / NBRC 15755 / NCIMB 13165 / 161).